Here is a 441-residue protein sequence, read N- to C-terminus: Glutamyl-tRNA reductase (441 aa).

Substrate-binding positions include 49–52, Ser110, 115–117, and Gln121; these read TCNR and EPQ. The active-site Nucleophile is the Cys50. 190-195 contributes to the NADP(+) binding site; the sequence is GAGEMA.

This sequence belongs to the glutamyl-tRNA reductase family. In terms of assembly, homodimer.

It carries out the reaction (S)-4-amino-5-oxopentanoate + tRNA(Glu) + NADP(+) = L-glutamyl-tRNA(Glu) + NADPH + H(+). It participates in porphyrin-containing compound metabolism; protoporphyrin-IX biosynthesis; 5-aminolevulinate from L-glutamyl-tRNA(Glu): step 1/2. Catalyzes the NADPH-dependent reduction of glutamyl-tRNA(Glu) to glutamate 1-semialdehyde (GSA). In Sulfurihydrogenibium sp. (strain YO3AOP1), this protein is Glutamyl-tRNA reductase.